Here is a 130-residue protein sequence, read N- to C-terminus: uncharacterized protein (130 aa).

2 consecutive transmembrane segments (helical) span residues 35-57 (FLIT…FISL) and 72-91 (IVFF…LLLL).

Its subcellular location is the cell membrane. This is an uncharacterized protein from Pasteurella multocida (strain Pm70).